The following is a 77-amino-acid chain: Putative antitoxin VapB24 (77 aa).

Its function is as follows. Possibly the antitoxin component of a type II toxin-antitoxin (TA) system. Its cognate toxin is VapC24 (Potential). This Mycobacterium tuberculosis (strain CDC 1551 / Oshkosh) protein is Putative antitoxin VapB24 (vapB24).